Here is a 340-residue protein sequence, read N- to C-terminus: tRNA N6-adenosine threonylcarbamoyltransferase (340 aa).

Residues histidine 111 and histidine 115 each contribute to the Fe cation site. Residues 134 to 138 (LVSGG), aspartate 167, glycine 180, and asparagine 276 each bind substrate. Aspartate 304 serves as a coordination point for Fe cation.

The protein belongs to the KAE1 / TsaD family. It depends on Fe(2+) as a cofactor.

Its subcellular location is the cytoplasm. The catalysed reaction is L-threonylcarbamoyladenylate + adenosine(37) in tRNA = N(6)-L-threonylcarbamoyladenosine(37) in tRNA + AMP + H(+). In terms of biological role, required for the formation of a threonylcarbamoyl group on adenosine at position 37 (t(6)A37) in tRNAs that read codons beginning with adenine. Is involved in the transfer of the threonylcarbamoyl moiety of threonylcarbamoyl-AMP (TC-AMP) to the N6 group of A37, together with TsaE and TsaB. TsaD likely plays a direct catalytic role in this reaction. This Helicobacter pylori (strain ATCC 700392 / 26695) (Campylobacter pylori) protein is tRNA N6-adenosine threonylcarbamoyltransferase.